Consider the following 626-residue polypeptide: MTVEERQGRVGGHGVSGGGGGRDQFPVGMRVLAVDDDPTCLKILENLLLRCQYHVTTTGQAATALKLLRENKDQFDLVISDVHMPDMDGFKLLELVGLEMDLPVIMLSANGETQTVMKGITHGACDYLLKPVRLEQLRTIWQHVIRRKNCDAKNRGNDDDAGQKAQGMNNEGESIGANRNKRQSRKSRDENGDDGDDSDENSNENGDSSTQKKPRVVWSVELHRKFVAAVNQLGIEKAVPKKILDLMNVENITRENVASHLQKYRLYLKRLSTDASRQANLAAAFGGRNPAYINMNSFGNYNAYGRYRTVPTAGHTQANNILTRMNSPSAFGVHGLLHSQPIQLGHAQNNLSTSLNDLGGLNNGNMIRGAQMSTILTGPSGNSFPNISNGAPLATANRSLQPLESSNQQHLSRVHSSSADPFSTLVGESPQFPDLGRTTNTWQTAVPSNIQDRGHNDNMSQATLHMNGPKIEPVSSFTSSNQIPLLGNEMQGQVASLASNVPIAFNQDTSPFNYGSSTNSRDMLNNSHVFSNSSINTSLPNLSLDNPAVPRQTLDRGNTGIVSPMQDGRIHHQAVSNQLNYNDDLMRTTGLQRGLSGGLDDIVVDMFRPDREDDGVPYIDGDWELV.

The disordered stretch occupies residues 1–22; it reads MTVEERQGRVGGHGVSGGGGGR. A compositionally biased stretch (gly residues) spans 9 to 22; the sequence is RVGGHGVSGGGGGR. One can recognise a Response regulatory domain in the interval 30–145; sequence RVLAVDDDPT…QLRTIWQHVI (116 aa). Asp81 is subject to 4-aspartylphosphate. The segment covering 151-162 has biased composition (basic and acidic residues); sequence DAKNRGNDDDAG. Disordered regions lie at residues 151-215 and 402-440; these read DAKN…KKPR and PLESSNQQHLSRVHSSSADPFSTLVGESPQFPDLGRTTN. The segment covering 191-202 has biased composition (acidic residues); it reads NGDDGDDSDENS. The myb-like GARP DNA-binding region spans 210–269; sequence TQKKPRVVWSVELHRKFVAAVNQLGIEKAVPKKILDLMNVENITRENVASHLQKYRLYLK. Polar residues predominate over residues 402–421; sequence PLESSNQQHLSRVHSSSADP.

It belongs to the ARR family. Type-B subfamily. In terms of processing, two-component system major event consists of a His-to-Asp phosphorelay between a sensor histidine kinase (HK) and a response regulator (RR). In plants, the His-to-Asp phosphorelay involves an additional intermediate named Histidine-containing phosphotransfer protein (HPt). This multistep phosphorelay consists of a His-Asp-His-Asp sequential transfer of a phosphate group between first a His and an Asp of the HK protein, followed by the transfer to a conserved His of the HPt protein and finally the transfer to an Asp in the receiver domain of the RR protein.

It is found in the nucleus. Functionally, transcriptional activator that binds specific DNA sequence. Functions as a response regulator involved in His-to-Asp phosphorelay signal transduction system. Phosphorylation of the Asp residue in the receiver domain activates the ability of the protein to promote the transcription of target genes. May directly activate some type-A response regulators in response to cytokinins. In Oryza sativa subsp. japonica (Rice), this protein is Two-component response regulator ORR24.